A 443-amino-acid chain; its full sequence is Phosphoglucosamine mutase (443 aa).

The active-site Phosphoserine intermediate is Ser-102. Residues Ser-102, Asp-241, Asp-243, and Asp-245 each contribute to the Mg(2+) site. Phosphoserine is present on Ser-102.

It belongs to the phosphohexose mutase family. Mg(2+) serves as cofactor. In terms of processing, activated by phosphorylation.

It carries out the reaction alpha-D-glucosamine 1-phosphate = D-glucosamine 6-phosphate. In terms of biological role, catalyzes the conversion of glucosamine-6-phosphate to glucosamine-1-phosphate. This chain is Phosphoglucosamine mutase, found in Polaromonas naphthalenivorans (strain CJ2).